The sequence spans 317 residues: Protein IRX15-LIKE (317 aa).

The chain crosses the membrane as a helical span at residues 27 to 47 (LWLLAFVSFFTIAFLLTLLYT).

In terms of tissue distribution, expressed in roots, rosette leaves, stems and siliques. Expressed in the xylem.

Its subcellular location is the golgi apparatus membrane. In terms of biological role, required for xylan biosynthesis, but not directly involved in catalyzing the addition of sugars to the growing polymer. In Arabidopsis thaliana (Mouse-ear cress), this protein is Protein IRX15-LIKE (IRX15-L).